A 57-amino-acid polypeptide reads, in one-letter code: Large ribosomal subunit protein bL32 (57 aa).

Residues 1 to 38 form a disordered region; that stretch reads MAVQQNKPTRSKRGMRRSHDALTAVTSLSVDQTSGEKH. Positions 24 to 33 are enriched in polar residues; sequence AVTSLSVDQT.

It belongs to the bacterial ribosomal protein bL32 family.

The polypeptide is Large ribosomal subunit protein bL32 (Enterobacter sp. (strain 638)).